Here is a 564-residue protein sequence, read N- to C-terminus: MFS-type transporter dmxR4 (564 aa).

The segment at 1-61 is disordered; the sequence is MSSERPDGSA…PAKEAPAKPA (61 aa). Residues 25 to 44 show a composition bias toward polar residues; that stretch reads TDSSRTSNDASQTSQDTAVQ. The span at 47 to 57 shows a compositional bias: basic and acidic residues; it reads PPKEAPAKEAP. 5 consecutive transmembrane segments (helical) span residues 71–91, 106–126, 138–158, 169–189, and 199–219; these read IALLLGLILMSMFLVALDRSI, AGDIGWYGSAYLLTCCSFQLL, TVFVANLLLFEVASAICGAAP, LAGIGAAGIFAGTIIAMVFLI, and GLFGAVFGITSISGPLIGGGF. Residue asparagine 222 is glycosylated (N-linked (GlcNAc...) asparagine). The next 7 helical transmembrane spans lie at 227 to 247, 265 to 285, 299 to 319, 348 to 368, 376 to 396, 405 to 425, and 438 to 458; these read WCFYINLPIGGVALIAIALWM, GLDLLGTAVFIPCIICLLLAL, IIALLVVFSVTFVVYAALQAF, GVHLLPVMISMIVGSVTGGFF, SPLAVTGSTIMTIGAALIYTF, WIGSLILYGIGLGWSFQAPNL, and SALALIMFVGLLAQAVFVSVG. The N-linked (GlcNAc...) asparagine glycan is linked to asparagine 469. 2 consecutive transmembrane segments (helical) span residues 470–490 and 512–532; these read LSWIPGFTASELTSSGAVSFL and VFMIGLVLCAVCVPGLASMEW. The tract at residues 534–564 is disordered; the sequence is SVKSRGSWDEKPAAKPTDKPTEEKKVPPEAV. A compositionally biased stretch (basic and acidic residues) spans 539-564; that stretch reads GSWDEKPAAKPTDKPTEEKKVPPEAV.

It belongs to the major facilitator superfamily. TCR/Tet family.

It localises to the membrane. MFS-type transporter; part of the gene cluster that mediates the biosynthesis of the dimeric xanthones cryptosporioptides. This Cryptosporiopsis sp. (strain 8999) protein is MFS-type transporter dmxR4.